The following is a 396-amino-acid chain: S-adenosylmethionine synthase (396 aa).

ATP is bound at residue H16. D18 contributes to the Mg(2+) binding site. A K(+)-binding site is contributed by E44. Residues E57 and Q100 each contribute to the L-methionine site. The tract at residues 100-110 is flexible loop; it reads QSPDINQGVDR. Residues 165–167, D240, 246–247, A263, and K267 each bind ATP; these read DAK and RK. Residue D240 coordinates L-methionine. Residue K271 participates in L-methionine binding.

This sequence belongs to the AdoMet synthase family. As to quaternary structure, homotetramer; dimer of dimers. Mg(2+) is required as a cofactor. Requires K(+) as cofactor.

The protein localises to the cytoplasm. The enzyme catalyses L-methionine + ATP + H2O = S-adenosyl-L-methionine + phosphate + diphosphate. The protein operates within amino-acid biosynthesis; S-adenosyl-L-methionine biosynthesis; S-adenosyl-L-methionine from L-methionine: step 1/1. Functionally, catalyzes the formation of S-adenosylmethionine (AdoMet) from methionine and ATP. The overall synthetic reaction is composed of two sequential steps, AdoMet formation and the subsequent tripolyphosphate hydrolysis which occurs prior to release of AdoMet from the enzyme. The polypeptide is S-adenosylmethionine synthase (Pseudomonas fluorescens (strain ATCC BAA-477 / NRRL B-23932 / Pf-5)).